The chain runs to 216 residues: MKQDSRFPNLFITDHPLIQHKLTHMRDKDTSTRTFRELLREITLLMGYEITRNLPITTKRVETPLVAVDAPVIAGKKLAIVPVLRAGIGMSDGLLDLVPSARVGHIGVYRAEDHRPVEYLVRLPDLEDRIFILCDPMVATGYSAVHAVDVLKRRNVPAANITFVALVAAPEGVQVFQDAHPDVKLFVASLDSHLNEHAYIVPGLGDAGDRLFGTKN.

Residues Arg-85, Arg-110, and 135–143 each bind 5-phospho-alpha-D-ribose 1-diphosphate; that span reads DPMVATGYS. Residues Ile-200 and 205 to 207 contribute to the uracil site; that span reads GDA. Asp-206 lines the 5-phospho-alpha-D-ribose 1-diphosphate pocket.

It belongs to the UPRTase family. Requires Mg(2+) as cofactor.

It catalyses the reaction UMP + diphosphate = 5-phospho-alpha-D-ribose 1-diphosphate + uracil. It participates in pyrimidine metabolism; UMP biosynthesis via salvage pathway; UMP from uracil: step 1/1. Allosterically activated by GTP. Catalyzes the conversion of uracil and 5-phospho-alpha-D-ribose 1-diphosphate (PRPP) to UMP and diphosphate. In Burkholderia ambifaria (strain ATCC BAA-244 / DSM 16087 / CCUG 44356 / LMG 19182 / AMMD) (Burkholderia cepacia (strain AMMD)), this protein is Uracil phosphoribosyltransferase.